A 156-amino-acid polypeptide reads, in one-letter code: Zinc finger SWIM domain-containing protein 7 homolog (156 aa).

Residues 82–120 form an SWIM-type zinc finger; that stretch reads YMCLIQGDYCSCPSFNFSVLLKSDSVYCKHQISSILAEI.

Belongs to the SWS1 family.

The protein localises to the nucleus. Its function is as follows. May be involved in the homologous recombination repair (HRR) pathway of double-stranded DNA breaks arising during DNA replication or induced by DNA-damaging agents. This Dictyostelium discoideum (Social amoeba) protein is Zinc finger SWIM domain-containing protein 7 homolog (zswim7).